A 208-amino-acid chain; its full sequence is Imidazoleglycerol-phosphate dehydratase (208 aa).

It belongs to the imidazoleglycerol-phosphate dehydratase family.

Its subcellular location is the cytoplasm. The catalysed reaction is D-erythro-1-(imidazol-4-yl)glycerol 3-phosphate = 3-(imidazol-4-yl)-2-oxopropyl phosphate + H2O. Its pathway is amino-acid biosynthesis; L-histidine biosynthesis; L-histidine from 5-phospho-alpha-D-ribose 1-diphosphate: step 6/9. This Hyphomonas neptunium (strain ATCC 15444) protein is Imidazoleglycerol-phosphate dehydratase.